Consider the following 739-residue polypeptide: Catalase-peroxidase 2 (739 aa).

The signal sequence occupies residues 1–26 (MKKSTIPSMSALTLAMSLAFGGAAIA). The segment at residues 105-227 (WHSAGVYRIF…MGATQMGLIY (123 aa)) is a cross-link (tryptophyl-tyrosyl-methioninium (Trp-Tyr) (with M-253)). Histidine 106 (proton acceptor) is an active-site residue. The segment at residues 227–253 (YVNPEGPNGVPDPLASAKEIRDTFGRM) is a cross-link (tryptophyl-tyrosyl-methioninium (Tyr-Met) (with W-105)). Histidine 268 contacts heme b.

The protein belongs to the peroxidase family. Peroxidase/catalase subfamily. As to quaternary structure, homodimer or homotetramer. Requires heme b as cofactor. Post-translationally, formation of the three residue Trp-Tyr-Met cross-link is important for the catalase, but not the peroxidase activity of the enzyme.

It catalyses the reaction H2O2 + AH2 = A + 2 H2O. It carries out the reaction 2 H2O2 = O2 + 2 H2O. Bifunctional enzyme with both catalase and broad-spectrum peroxidase activity. In Shewanella sp. (strain ANA-3), this protein is Catalase-peroxidase 2.